A 222-amino-acid chain; its full sequence is Large ribosomal subunit protein uL1 (222 aa).

Belongs to the universal ribosomal protein uL1 family. Part of the 50S ribosomal subunit.

In terms of biological role, binds directly to 23S rRNA. Probably involved in E site tRNA release. Its function is as follows. Protein L1 is also a translational repressor protein, it controls the translation of its operon by binding to its mRNA. This is Large ribosomal subunit protein uL1 from Pyrobaculum neutrophilum (strain DSM 2338 / JCM 9278 / NBRC 100436 / V24Sta) (Thermoproteus neutrophilus).